Consider the following 258-residue polypeptide: MKLDEVTISRAIIEEFSKVFLDYTDVDVALVGGGPANLVAAKYLAEAGLKTVIYEKKLAVGGGMWAGGMMFPRIVVQEDALHILDEFGISYHEYENGYYVANSIESVGKLISGATSAGAEIFNLVNVEDVMIRENDEICGLVINWTAVEIGKLHVDPLAIRSKVVVDGTGHPAVVCSTVQRKVPGAKLGELGVVGEKPMWADVGEKMLLDTTKEVYPNLYVAGMAANAVAGAPRMGPVFGGMLLSGKQVAELIIERLG.

NAD(+) is bound by residues alanine 36, 55–56, glycine 63, valine 127, and 154–156; these read EK and HVD. 2 residues coordinate Fe cation: aspartate 156 and histidine 171. Position 224 (methionine 224) interacts with NAD(+). Arginine 234 provides a ligand contact to glycine.

The protein belongs to the THI4 family. As to quaternary structure, homooctamer; tetramer of dimers. Requires Fe(2+) as cofactor.

It carries out the reaction hydrogen sulfide + glycine + NAD(+) = ADP-5-ethyl-4-methylthiazole-2-carboxylate + nicotinamide + 3 H2O + H(+). It functions in the pathway cofactor biosynthesis; thiamine diphosphate biosynthesis. Its function is as follows. Involved in the biosynthesis of the thiazole moiety of thiamine. Catalyzes the conversion of NAD and glycine to adenosine diphosphate 5-(2-hydroxyethyl)-4-methylthiazole-2-carboxylate (ADT), an adenylated thiazole intermediate, using free sulfide as a source of sulfur. The polypeptide is Thiamine thiazole synthase (Methanococcoides burtonii (strain DSM 6242 / NBRC 107633 / OCM 468 / ACE-M)).